The chain runs to 28 residues: ALWKTLLKNVGKAAGKAALNAVTDMVNQ.

As to expression, expressed by the skin glands.

It is found in the secreted. Functionally, has antibacterial activity against the Gram-positive bacteria S.aureus and E.faecalis, and the Gram-negative bacteria P.aeruginosa and E.coli. Has antiprotozoal activity against T.cruzi. Has antifungal activity against the yeasts C.tropicalis (MIC=10.9 uM), C.guilliermondii (MIC=21.8 uM), C.albicans (MIC=21.8 uM) and C.albicans ATCC 1023 (MIC=10.9 uM). Decreases viability of murine peritoneal cells. Fuses to, and disrupts liposomes. The polypeptide is Dermaseptin-DI2 (Phyllomedusa distincta (Monkey frog)).